A 188-amino-acid polypeptide reads, in one-letter code: Xanthine phosphoribosyltransferase (188 aa).

2 residues coordinate xanthine: leucine 20 and asparagine 27. 127–131 (AYGNA) lines the 5-phospho-alpha-D-ribose 1-diphosphate pocket. Lysine 155 is a binding site for xanthine.

This sequence belongs to the purine/pyrimidine phosphoribosyltransferase family. Xpt subfamily. In terms of assembly, homodimer.

It is found in the cytoplasm. The enzyme catalyses XMP + diphosphate = xanthine + 5-phospho-alpha-D-ribose 1-diphosphate. It functions in the pathway purine metabolism; XMP biosynthesis via salvage pathway; XMP from xanthine: step 1/1. Converts the preformed base xanthine, a product of nucleic acid breakdown, to xanthosine 5'-monophosphate (XMP), so it can be reused for RNA or DNA synthesis. The chain is Xanthine phosphoribosyltransferase from Parabacteroides distasonis (strain ATCC 8503 / DSM 20701 / CIP 104284 / JCM 5825 / NCTC 11152).